A 128-amino-acid chain; its full sequence is Small ribosomal subunit protein uS11 (128 aa).

Belongs to the universal ribosomal protein uS11 family. Part of the 30S ribosomal subunit. Interacts with proteins S7 and S18. Binds to IF-3.

Its function is as follows. Located on the platform of the 30S subunit, it bridges several disparate RNA helices of the 16S rRNA. Forms part of the Shine-Dalgarno cleft in the 70S ribosome. The sequence is that of Small ribosomal subunit protein uS11 from Methylococcus capsulatus (strain ATCC 33009 / NCIMB 11132 / Bath).